The sequence spans 652 residues: Beta-glucuronidase (652 aa).

The first 22 residues, 1–22 (MVRGPAGAWAVLGPLLWGCGLA), serve as a signal peptide directing secretion. 2 N-linked (GlcNAc...) asparagine glycosylation sites follow: N173 and N420. The active-site Proton donor is E451. An N-linked (GlcNAc...) asparagine glycan is attached at N631.

The protein belongs to the glycosyl hydrolase 2 family. As to quaternary structure, homotetramer.

Its subcellular location is the lysosome. The enzyme catalyses a beta-D-glucuronoside + H2O = D-glucuronate + an alcohol. Inhibited by L-aspartic acid. In terms of biological role, plays an important role in the degradation of dermatan and keratan sulfates. The protein is Beta-glucuronidase (GUSB) of Sus scrofa (Pig).